A 182-amino-acid polypeptide reads, in one-letter code: MILLHAIYTLWVIILLPLLNAEKFVPKVTEAPIETSFNLVSFDDSNTSIRLDGWGVVWISFDAGENWETVKEIEERIFRFTVDPFHGQERGFAFICESPKFYITDDRGESWRALTIPSSEEYLDGDCFITTHPRNKELLIANCYSYMIDADVLYDPSEIYLSNDGNPFLKLNLPWKRKKTTI.

BNR repeat units follow at residues 58 to 69 (WISFDAGENWET) and 102 to 113 (YITDDRGESWRA).

This is an uncharacterized protein from Saccharomyces cerevisiae (strain ATCC 204508 / S288c) (Baker's yeast).